A 238-amino-acid chain; its full sequence is 2-C-methyl-D-erythritol 4-phosphate cytidylyltransferase (238 aa).

This sequence belongs to the IspD/TarI cytidylyltransferase family. IspD subfamily.

The catalysed reaction is 2-C-methyl-D-erythritol 4-phosphate + CTP + H(+) = 4-CDP-2-C-methyl-D-erythritol + diphosphate. It functions in the pathway isoprenoid biosynthesis; isopentenyl diphosphate biosynthesis via DXP pathway; isopentenyl diphosphate from 1-deoxy-D-xylulose 5-phosphate: step 2/6. Functionally, catalyzes the formation of 4-diphosphocytidyl-2-C-methyl-D-erythritol from CTP and 2-C-methyl-D-erythritol 4-phosphate (MEP). The chain is 2-C-methyl-D-erythritol 4-phosphate cytidylyltransferase from Acinetobacter baumannii (strain SDF).